Reading from the N-terminus, the 123-residue chain is Small ribosomal subunit protein uS13 (123 aa).

The segment at 103–123 is disordered; the sequence is TRTNARTRKGPKKTVGVRRKK. Over residues 105 to 123 the composition is skewed to basic residues; it reads TNARTRKGPKKTVGVRRKK.

The protein belongs to the universal ribosomal protein uS13 family. Part of the 30S ribosomal subunit. Forms a loose heterodimer with protein S19. Forms two bridges to the 50S subunit in the 70S ribosome.

Its function is as follows. Located at the top of the head of the 30S subunit, it contacts several helices of the 16S rRNA. In the 70S ribosome it contacts the 23S rRNA (bridge B1a) and protein L5 of the 50S subunit (bridge B1b), connecting the 2 subunits; these bridges are implicated in subunit movement. Contacts the tRNAs in the A and P-sites. The sequence is that of Small ribosomal subunit protein uS13 from Desulforudis audaxviator (strain MP104C).